The sequence spans 540 residues: MEREALPWGLEPQDVQSSDEMRSPEGYLRGNMSENEEEEISQQEGSGDYEVEEIPFGLEPQSPGFEPQSPEFEPQSPRFEPESPGFESRSPGLVPPSPEFAPRSPESDSQSPEFESQSPRYEPQSPGYEPRSPGYEPRSPGYESESSRYESQNTELKTQSPEFEAQSSKFQEGAEMLLNPEEKSPLNISVGVHPLDSFTQGFGEQPTGDLPIGPPFEMPTGALLSTPQFEMLQNPLGLTGALRGPGRRGGRARGGQGPRPNICGICGKSFGRGSTLIQHQRIHTGEKPYKCEVCSKAFSQSSDLIKHQRTHTGERPYKCPRCGKAFADSSYLLRHQRTHSGQKPYKCPHCGKAFGDSSYLLRHQRTHSHERPYSCTECGKCYSQNSSLRSHQRVHTGQRPFSCGICGKSFSQRSALIPHARSHAREKPFKCPECGKRFGQSSVLAIHARTHLPGRTYSCPDCGKTFNRSSTLIQHQRSHTGERPYRCAVCGKGFCRSSTLLQHHRVHSGERPYKCDDCGKAFSQSSDLIRHQRTHAAGRR.

Disordered stretches follow at residues 1-166 (MERE…FEAQ) and 239-258 (TGAL…GQGP). 3 positions are modified to phosphoserine: Ser17, Ser18, and Ser23. A Phosphotyrosine modification is found at Tyr27. Ser33 is modified (phosphoserine). The span at 34 to 53 (ENEEEEISQQEGSGDYEVEE) shows a compositional bias: acidic residues. Phosphoserine is present on residues Ser62, Ser69, Ser76, Ser83, Ser90, Ser97, Ser104, Ser107, Ser111, Ser118, and Ser125. Positions 62 to 77 (SPGFEPQSPEFEPQSP) are enriched in low complexity. Positions 107-119 (SDSQSPEFESQSP) are enriched in polar residues. Tyr128 is subject to Phosphotyrosine. Ser132 carries the phosphoserine modification. Phosphotyrosine is present on Tyr135. Position 139 is a phosphoserine (Ser139). Tyr142 is modified (phosphotyrosine). Ser144 and Ser147 each carry phosphoserine. Polar residues predominate over residues 149-166 (YESQNTELKTQSPEFEAQ). Phosphothreonine is present on Thr158. Ser160 is subject to Phosphoserine. The segment at 261–283 (NICGICGKSFGRGSTLIQHQRIH) adopts a C2H2-type 1 zinc-finger fold. Phosphothreonine is present on Thr284. Residue Tyr289 is modified to Phosphotyrosine. 4 C2H2-type zinc fingers span residues 289–311 (YKCE…QRTH), 317–339 (YKCP…QRTH), 345–367 (YKCP…QRTH), and 373–395 (YSCT…QRVH). Phosphoserine is present on residues Ser295 and Ser299. Position 396 is a phosphothreonine (Thr396). 5 consecutive C2H2-type zinc fingers follow at residues 401–423 (FSCG…ARSH), 429–451 (FKCP…ARTH), 457–479 (YSCP…QRSH), 485–507 (YRCA…HRVH), and 513–535 (YKCD…QRTH). Residue Ser442 is modified to Phosphoserine.

This sequence belongs to the krueppel C2H2-type zinc-finger protein family. Interacts (via zinc-finger domains) with TP53 (via N-terminus); interaction might be facilitated by TP53 oligomerization state. Interacts with ELP3. Post-translationally, may be phosphorylated at residue 'Ser-5' of the tandem heptapeptide repeats in the N-terminus. Phosphorylation might be increased upon RAS pathway activation and negatively regulate protein stability.

The protein resides in the nucleus. It localises to the chromosome. Its function is as follows. Binds to mammalian-wide interspersed repeat (MIRs) sequences in euchromatin and promoter regions of genes at the consensus sequence 5'-GCTGTGTG-[N20]-CCTCTCTG-3', consisting of two anchor regions connected by a linker region; the linker region probably does not contribute to the binding specificity. Required for cell homeostasis. May be involved in transcriptional regulation. This chain is Zinc finger protein 768 (ZNF768), found in Homo sapiens (Human).